A 631-amino-acid polypeptide reads, in one-letter code: Biotin--protein ligase (631 aa).

In terms of domain architecture, BPL/LPL catalytic spans 341–553 (ELYAKLINGC…QFDRYHRLLL (213 aa)).

Belongs to the biotin--protein ligase family. Monomer.

It localises to the cytoplasm. It catalyses the reaction apo-[methylmalonyl-CoA:pyruvate carboxytransferase] + biotin + ATP = holo-[methylmalonyl-CoA:pyruvate carboxytransferase] + AMP + diphosphate + H(+). The enzyme catalyses apo-[propionyl-CoA:carbon-dioxide ligase (ADP-forming)] + biotin + ATP = holo-[propionyl-CoA:carbon-dioxide ligase (ADP-forming)] + AMP + diphosphate + H(+). It carries out the reaction apo-[3-methylcrotonoyl-CoA:carbon-dioxide ligase (ADP-forming)] + biotin + ATP = holo-[3-methylcrotonoyl-CoA:carbon-dioxide ligase (ADP-forming)] + AMP + diphosphate + H(+). The catalysed reaction is biotin + L-lysyl-[protein] + ATP = N(6)-biotinyl-L-lysyl-[protein] + AMP + diphosphate + H(+). In terms of biological role, post-translational modification of specific protein by attachment of biotin. Acts on various carboxylases such as acetyl-CoA-carboxylase, pyruvate carboxylase, propionyl CoA carboxylase, and 3-methylcrotonyl CoA carboxylase. The protein is Biotin--protein ligase (bpl1) of Schizosaccharomyces pombe (strain 972 / ATCC 24843) (Fission yeast).